The following is a 488-amino-acid chain: Ribulose bisphosphate carboxylase large chain (488 aa).

The substrate site is built by N127 and T177. K179 acts as the Proton acceptor in catalysis. K181 contacts substrate. The Mg(2+) site is built by K205, D207, and E208. K205 carries the post-translational modification N6-carboxylysine. H297 acts as the Proton acceptor in catalysis. Substrate is bound by residues R298, H330, and S382.

This sequence belongs to the RuBisCO large chain family. Type I subfamily. In terms of assembly, heterohexadecamer of 8 large chains and 8 small chains. Requires Mg(2+) as cofactor.

The protein localises to the plastid. Its subcellular location is the chloroplast. The enzyme catalyses 2 (2R)-3-phosphoglycerate + 2 H(+) = D-ribulose 1,5-bisphosphate + CO2 + H2O. It carries out the reaction D-ribulose 1,5-bisphosphate + O2 = 2-phosphoglycolate + (2R)-3-phosphoglycerate + 2 H(+). Its function is as follows. RuBisCO catalyzes two reactions: the carboxylation of D-ribulose 1,5-bisphosphate, the primary event in carbon dioxide fixation, as well as the oxidative fragmentation of the pentose substrate in the photorespiration process. Both reactions occur simultaneously and in competition at the same active site. This is Ribulose bisphosphate carboxylase large chain (rbcL) from Pyropia dentata (Red alga).